Reading from the N-terminus, the 515-residue chain is MNPDLDTGHNTSAPAQWGELKDANFTGPNQTSSNSTLPQLDVTRAISVGLVLGAFILFAIVGNILVILSVACNRHLRTPTNYFIVNLAIADLLLSFTVLPFSATLEVLGYWVLGRIFCDIWAAVDVLCCTASILSLCAISIDRYIGVRYSLQYPTLVTRRKAILALLSVWVLSTVISIGPLLGWKEPAPNDDKECGVTEEPFYALFSSLGSFYIPLAVILVMYCRVYIVAKRTTKNLEAGVMKEMSNSKELTLRIHSKNFHEDTLSSTKAKGHNPRSSIAVKLFKFSREKKAAKTLGIVVGMFILCWLPFFIALPLGSLFSTLKPPDAVFKVVFWLGYFNSCLNPIIYPCSSKEFKRAFMRILGCQCRSGRRRRRRRRLGACAYTYRPWTRGGSLERSQSRKDSLDDSGSCMSGSQRTLPSASPSPGYLGRGAQPPLELCAYPEWKSGALLSLPEPPGRRGRLDSGPLFTFKLLGEPESPGTEGDASNGGCDATTDLANGQPGFKSNMPLAPGHF.

At 1–45 the chain is on the extracellular side; the sequence is MNPDLDTGHNTSAPAQWGELKDANFTGPNQTSSNSTLPQLDVTRA. Asparagine 10, asparagine 24, and asparagine 34 each carry an N-linked (GlcNAc...) asparagine glycan. A helical transmembrane segment spans residues 46–70; that stretch reads ISVGLVLGAFILFAIVGNILVILSV. Topologically, residues 71-83 are cytoplasmic; it reads ACNRHLRTPTNYF. A helical transmembrane segment spans residues 84–105; it reads IVNLAIADLLLSFTVLPFSATL. Residues 106-115 are Extracellular-facing; sequence EVLGYWVLGR. A helical transmembrane segment spans residues 116-141; it reads IFCDIWAAVDVLCCTASILSLCAISI. A disulfide bond links cysteine 118 and cysteine 195. Over 142–161 the chain is Cytoplasmic; it reads DRYIGVRYSLQYPTLVTRRK. Residues 162–184 form a helical membrane-spanning segment; it reads AILALLSVWVLSTVISIGPLLGW. The Extracellular segment spans residues 185 to 201; it reads KEPAPNDDKECGVTEEP. The helical transmembrane segment at 202–224 threads the bilayer; the sequence is FYALFSSLGSFYIPLAVILVMYC. At 225-295 the chain is on the cytoplasmic side; sequence RVYIVAKRTT…FSREKKAAKT (71 aa). Threonine 264 bears the Phosphothreonine mark. The chain crosses the membrane as a helical span at residues 296–319; it reads LGIVVGMFILCWLPFFIALPLGSL. Residues 320-326 are Extracellular-facing; the sequence is FSTLKPP. The helical transmembrane segment at 327–351 threads the bilayer; it reads DAVFKVVFWLGYFNSCLNPIIYPCS. Over 352-515 the chain is Cytoplasmic; sequence SKEFKRAFMR…SNMPLAPGHF (164 aa). Cysteine 365 carries S-palmitoyl cysteine lipidation. The short motif at 368–378 is the Nuclear localization signal element; it reads RSGRRRRRRRR. Disordered regions lie at residues 392-428 and 473-515; these read GGSL…SPGY and LLGE…PGHF. Over residues 410-424 the composition is skewed to polar residues; the sequence is SCMSGSQRTLPSASP.

This sequence belongs to the G-protein coupled receptor 1 family. Adrenergic receptor subfamily. ADRA1B sub-subfamily. As to quaternary structure, homo- and heterooligomer. Heterooligomerizes with ADRA1B homooligomers in cardiac myocytes. Interacts with CAVIN4.

The protein localises to the nucleus membrane. It is found in the cell membrane. Its subcellular location is the cytoplasm. The protein resides in the membrane. It localises to the caveola. In terms of biological role, this alpha-adrenergic receptor mediates its action by association with G proteins that activate a phosphatidylinositol-calcium second messenger system. Its effect is mediated by G(q) and G(11) proteins. Nuclear ADRA1A-ADRA1B heterooligomers regulate phenylephrine (PE)-stimulated ERK signaling in cardiac myocytes. The protein is Alpha-1B adrenergic receptor (ADRA1B) of Mesocricetus auratus (Golden hamster).